Consider the following 1312-residue polypeptide: DNA repair protein RAD50.L (1312 aa).

Residues R13, N38, G39, G41, K42, T43, T44, V67, D69, and Q159 each coordinate ATP. T43 contacts Mg(2+). Q159 serves as a coordination point for Mg(2+). 3 coiled-coil regions span residues 203–342 (VREY…LNRE), 415–558 (LREF…IKSR), and 587–628 (INQT…FEEK). Positions 635 to 734 (SQDFDSDLSR…RKDDMMELKP (100 aa)) constitute a Zinc-hook domain. Zn(2+) is bound by residues C681 and C684. The stretch at 712-1070 (LKSAEGELKR…ENKSESLKTN (359 aa)) forms a coiled coil.

This sequence belongs to the SMC family. RAD50 subfamily. In terms of assembly, component of the MRN complex composed of two heterodimers RAD50 and MRE11 associated with a single NBN. The cofactor is Zn(2+).

It is found in the nucleus. Its subcellular location is the chromosome. It localises to the telomere. It catalyses the reaction ATP + H2O = ADP + phosphate + H(+). Functionally, component of the MRN complex, which plays a central role in double-strand break (DSB) repair, DNA recombination, maintenance of telomere integrity and meiosis. The MRN complex is involved in the repair of DNA double-strand breaks (DSBs) via homologous recombination (HR), an error-free mechanism which primarily occurs during S and G2 phases. The complex (1) mediates the end resection of damaged DNA, which generates proper single-stranded DNA, a key initial steps in HR, and is (2) required for the recruitment of other repair factors and efficient activation of ATM and ATR upon DNA damage. The MRN complex possesses single-strand endonuclease activity and double-strand-specific 3'-5' exonuclease activity, which are provided by mre11, to initiate end resection, which is required for single-strand invasion and recombination. Within the complex, rad50 is both required to bind DNA ends and hold them in close proximity and regulate the activity of MRE11. Rad50 provides an ATP-dependent control of MRE11 by positioning DNA ends into the mre11 active site: ATP-binding induces a large structural change from an open form with accessible MRE11 nuclease sites into a closed form. The MRN complex is also required for DNA damage signaling via activation of the atm and atr kinases: the nuclease activity of mre11 is not required to activate ATM and ATR. The MRN complex promotes recruitment of topbp1 to DNA damage sites. The MRN complex and rbbp8/CtIP are also required for chromosome alignment during metaphase. The sequence is that of DNA repair protein RAD50.L from Xenopus laevis (African clawed frog).